Consider the following 34-residue polypeptide: Photosystem II reaction center protein Psb30 (34 aa).

A helical transmembrane segment spans residues 6–26; sequence VIAQLVSLGVIVLVGPAVIIL.

The protein belongs to the Psb30/Ycf12 family. In terms of assembly, PSII is composed of 1 copy each of membrane proteins PsbA, PsbB, PsbC, PsbD, PsbE, PsbF, PsbH, PsbI, PsbJ, PsbK, PsbL, PsbM, PsbT, PsbX, PsbY, PsbZ, Psb30/Ycf12, peripheral proteins of the oxygen-evolving complex and a large number of cofactors. It forms dimeric complexes.

It is found in the plastid. Its subcellular location is the chloroplast thylakoid membrane. A core subunit of photosystem II (PSII), probably helps stabilize the reaction center. This Pyropia yezoensis (Susabi-nori) protein is Photosystem II reaction center protein Psb30.